Consider the following 160-residue polypeptide: Ribosome maturation factor RimP (160 aa).

The protein belongs to the RimP family.

The protein localises to the cytoplasm. In terms of biological role, required for maturation of 30S ribosomal subunits. The chain is Ribosome maturation factor RimP from Geobacter sp. (strain M21).